The chain runs to 460 residues: Glycine--tRNA ligase (460 aa).

Substrate-binding residues include R99 and E162. Residues 194–196 (RNE), 204–209 (FRTREF), 281–282 (EL), and 325–328 (GVGR) each bind ATP. 209–213 (FEQME) serves as a coordination point for substrate. Residue 321–325 (EPAAG) participates in substrate binding.

It belongs to the class-II aminoacyl-tRNA synthetase family. As to quaternary structure, homodimer.

The protein localises to the cytoplasm. The catalysed reaction is tRNA(Gly) + glycine + ATP = glycyl-tRNA(Gly) + AMP + diphosphate. Its function is as follows. Catalyzes the attachment of glycine to tRNA(Gly). This is Glycine--tRNA ligase from Streptomyces coelicolor (strain ATCC BAA-471 / A3(2) / M145).